A 202-amino-acid polypeptide reads, in one-letter code: MEALLSIFVESVFVKNMALAYFLGMCTFLAISKKIDAAIGLGIAVVVVLTITVPVNNLMFNYLLADGALAWAGLEGVDLSFLGLICYIGVIAAIVQIMEMVLDKYFPALYGALGVFLPLITVNCAILGAALLMVQREYTFSESVVFGVGSGVGWAFAIVALAGIREKLKYSDVPEGLRGLGITFITVGLMSLGFMSFGGIAL.

6 consecutive transmembrane segments (helical) span residues 11–31 (SVFV…FLAI), 35–55 (IDAA…TVPV), 81–101 (FLGL…MEMV), 114–134 (GVFL…LLMV), 144–164 (VVFG…LAGI), and 182–202 (ITFI…GIAL).

It belongs to the NqrDE/RnfAE family. In terms of assembly, composed of six subunits; NqrA, NqrB, NqrC, NqrD, NqrE and NqrF.

The protein localises to the cell inner membrane. The catalysed reaction is a ubiquinone + n Na(+)(in) + NADH + H(+) = a ubiquinol + n Na(+)(out) + NAD(+). In terms of biological role, NQR complex catalyzes the reduction of ubiquinone-1 to ubiquinol by two successive reactions, coupled with the transport of Na(+) ions from the cytoplasm to the periplasm. NqrA to NqrE are probably involved in the second step, the conversion of ubisemiquinone to ubiquinol. The chain is Na(+)-translocating NADH-quinone reductase subunit E from Saccharophagus degradans (strain 2-40 / ATCC 43961 / DSM 17024).